The following is a 116-amino-acid chain: Iron-sulfur cluster insertion protein ErpA (116 aa).

Residues cysteine 44, cysteine 108, and cysteine 110 each coordinate iron-sulfur cluster.

This sequence belongs to the HesB/IscA family. In terms of assembly, homodimer. The cofactor is iron-sulfur cluster.

Functionally, required for insertion of 4Fe-4S clusters for at least IspG. The polypeptide is Iron-sulfur cluster insertion protein ErpA (Pseudomonas fluorescens (strain ATCC BAA-477 / NRRL B-23932 / Pf-5)).